Consider the following 207-residue polypeptide: Large ribosomal subunit protein uL4 (207 aa).

The tract at residues Glu53–Gly85 is disordered.

Belongs to the universal ribosomal protein uL4 family. In terms of assembly, part of the 50S ribosomal subunit.

Its function is as follows. One of the primary rRNA binding proteins, this protein initially binds near the 5'-end of the 23S rRNA. It is important during the early stages of 50S assembly. It makes multiple contacts with different domains of the 23S rRNA in the assembled 50S subunit and ribosome. In terms of biological role, forms part of the polypeptide exit tunnel. In Novosphingobium aromaticivorans (strain ATCC 700278 / DSM 12444 / CCUG 56034 / CIP 105152 / NBRC 16084 / F199), this protein is Large ribosomal subunit protein uL4.